Here is a 368-residue protein sequence, read N- to C-terminus: Aminomethyltransferase (368 aa).

It belongs to the GcvT family. As to quaternary structure, the glycine cleavage system is composed of four proteins: P, T, L and H.

It catalyses the reaction N(6)-[(R)-S(8)-aminomethyldihydrolipoyl]-L-lysyl-[protein] + (6S)-5,6,7,8-tetrahydrofolate = N(6)-[(R)-dihydrolipoyl]-L-lysyl-[protein] + (6R)-5,10-methylene-5,6,7,8-tetrahydrofolate + NH4(+). Its function is as follows. The glycine cleavage system catalyzes the degradation of glycine. The chain is Aminomethyltransferase from Xylella fastidiosa (strain 9a5c).